A 393-amino-acid polypeptide reads, in one-letter code: Inulin fructotransferase [DFA-I-forming] (393 aa).

It catalyses the reaction Produces alpha-D-fructofuranose beta-D-fructofuranose 1,2':2,1'-dianhydride (DFA I) by successively eliminating the diminishing (2-&gt;1)-beta-D-fructan (inulin) chain from the terminal D-fructosyl-D-fructosyl disaccharide.. The sequence is that of Inulin fructotransferase [DFA-I-forming] from Arthrobacter globiformis.